A 332-amino-acid polypeptide reads, in one-letter code: Anthranilate phosphoribosyltransferase (332 aa).

5-phospho-alpha-D-ribose 1-diphosphate-binding positions include glycine 78, 81 to 82, serine 86, 88 to 91, 106 to 114, and serine 118; these read GD, NIST, and KHGNKSITS. Anthranilate is bound at residue glycine 78. Serine 90 provides a ligand contact to Mg(2+). Position 109 (asparagine 109) interacts with anthranilate. Arginine 163 provides a ligand contact to anthranilate. Mg(2+) contacts are provided by aspartate 222 and glutamate 223.

It belongs to the anthranilate phosphoribosyltransferase family. Homodimer. The cofactor is Mg(2+).

The enzyme catalyses N-(5-phospho-beta-D-ribosyl)anthranilate + diphosphate = 5-phospho-alpha-D-ribose 1-diphosphate + anthranilate. The protein operates within amino-acid biosynthesis; L-tryptophan biosynthesis; L-tryptophan from chorismate: step 2/5. Functionally, catalyzes the transfer of the phosphoribosyl group of 5-phosphorylribose-1-pyrophosphate (PRPP) to anthranilate to yield N-(5'-phosphoribosyl)-anthranilate (PRA). In Staphylococcus aureus (strain USA300), this protein is Anthranilate phosphoribosyltransferase.